The following is a 41-amino-acid chain: Omega-theraphotoxin-Hg1a (41 aa).

3 cysteine pairs are disulfide-bonded: Cys7/Cys21, Cys14/Cys26, and Cys20/Cys33.

This sequence belongs to the neurotoxin 10 (Hwtx-1) family. 56 (SNX-482) subfamily. As to expression, expressed by the venom gland.

It localises to the secreted. Functionally, toxin that blocks vertebrate P/Q-type (Cav2.1/CACNA1A) and R-type (Cav2.3/CACNA1E) voltage-gated calcium channels. Also inhibits sodium channels (Nav) in bovine chromaffin cells by delaying sodium channel inactivation. The polypeptide is Omega-theraphotoxin-Hg1a (Hysterocrates gigas (Cameroon red baboon tarantula)).